The sequence spans 164 residues: UPF0262 protein Saro_0143 (164 aa).

It belongs to the UPF0262 family.

This is UPF0262 protein Saro_0143 from Novosphingobium aromaticivorans (strain ATCC 700278 / DSM 12444 / CCUG 56034 / CIP 105152 / NBRC 16084 / F199).